A 703-amino-acid chain; its full sequence is Calcium-responsive transcription factor (703 aa).

Disordered regions lie at residues 1 to 61, 130 to 150, and 517 to 539; these read MEQS…QNIP, GPLV…SDRN, and GNSQ…SLSP. Residues 9–22 show a composition bias toward basic and acidic residues; that stretch reads KVNHNDSEESKTDS. Residues 23-34 show a composition bias toward polar residues; it reads QHLTYMDSSEPS.

The protein resides in the nucleus. In terms of biological role, acts as a transcriptional activator that mediates the calcium- and neuron-selective induction of BDNF exon III transcription. Binds to the consensus calcium-response element CaRE1 5'-CTATTTCGAG-3' sequence. This is Calcium-responsive transcription factor (CARF) from Bos taurus (Bovine).